The sequence spans 373 residues: MWPPSRRQLCLAFLLVCALSAFSFLLHLHQDLFRNGLALSLPCLERQPVPAPVAIVCLPVTSPASNASSCAGRPAAPSGIWTIHPDGRFGNQMGQYATLLALAQLNGRRAFILPAMHAALAPVFRITLPVLAPEVNRRTSWKQLLLHDWMSEEYSRLEDPFLKFTGFPCSWTFFHHVREQIRREFTLHDHLREEAQRLLGKLRLGRTGARPRTFVGVHVRRGDYLQVMPQRWKGVVGDRAYLQQAMDWFRARHEAPIFVVTSNGMKWCWENIDASRGDVVFAGNGLESSPAKDFALLTQCNHTVMTIGTFGFWAAYLAGGDTVYLANFTLPDSEFLKIFKPEAAFLPEWVGINADLSPVRTLSGSWRPWRFLG.

At 1–12 the chain is on the cytoplasmic side; sequence MWPPSRRQLCLA. A helical; Signal-anchor for type II membrane protein transmembrane segment spans residues 13-29; sequence FLLVCALSAFSFLLHLH. At 30-373 the chain is on the lumenal side; the sequence is QDLFRNGLAL…GSWRPWRFLG (344 aa). Residues asparagine 66, asparagine 301, and asparagine 327 are each glycosylated (N-linked (GlcNAc...) asparagine).

This sequence belongs to the glycosyltransferase 11 family. In terms of tissue distribution, brain.

The protein resides in the golgi apparatus. It is found in the golgi stack membrane. The catalysed reaction is a beta-D-galactosyl-(1-&gt;4)-N-acetyl-beta-D-glucosaminyl derivative + GDP-beta-L-fucose = an alpha-L-Fuc-(1-&gt;2)-beta-D-Gal-(1-&gt;4)-beta-D-GlcNAc derivative + GDP + H(+). It carries out the reaction a ganglioside GA1 + GDP-beta-L-fucose = a ganglioside Fuc-GA1 + GDP + H(+). The enzyme catalyses a beta-D-Gal-(1-&gt;3)-beta-D-GlcNAc-(1-&gt;3)-beta-D-Gal-(1-&gt;4)-beta-D-Glc-(1&lt;-&gt;1')-Cer(d18:1(4E)) + GDP-beta-L-fucose = alpha-L-fucosyl-(1-&gt;2)- beta-D-galactosyl-(1-&gt;3)-N-acetyl-beta-D-glucosaminyl-(1-&gt;3)-beta-D-galactosyl-(1-&gt;4)-beta-D-glucosyl-(1&lt;-&gt;1')-N-acylsphing-4-enine + GDP + H(+). It catalyses the reaction a neolactoside nLc4Cer(d18:1(4E)) + GDP-beta-L-fucose = a neolactoside IV(2)-alpha-Fuc-nLc4Cer(d18:1(4E)) + GDP + H(+). The catalysed reaction is a ganglioside GM1 + GDP-beta-L-fucose = a ganglioside Fuc-GM1 + GDP + H(+). It carries out the reaction beta-D-galactosyl-(1-&gt;3)-N-acetyl-D-galactosamine + GDP-beta-L-fucose = alpha-L-fucosyl-(1-&gt;2)-beta-D-galactosyl-(1-&gt;3)-N-acetyl-D-galactosamine + GDP + H(+). It functions in the pathway protein modification; protein glycosylation. Functionally, catalyzes the transfer of L-fucose, from a guanosine diphosphate-beta-L-fucose, to the terminal galactose residue of glycoconjugates through an alpha(1,2) linkage leading to H antigen synthesis that is an intermediate substrate in the synthesis of ABO blood group antigens. H antigen is essential for maturation of the glomerular layer of the main olfactory bulb, in cell migration and early cell-cell contacts during tumor associated angiogenesis. Preferentially fucosylates soluble lactose and to a lesser extent fucosylates glycolipids gangliosides GA1 and GM1a. The sequence is that of Galactoside alpha-(1,2)-fucosyltransferase 1 from Oryctolagus cuniculus (Rabbit).